We begin with the raw amino-acid sequence, 428 residues long: Glutamate-1-semialdehyde 2,1-aminomutase 1 (428 aa).

An N6-(pyridoxal phosphate)lysine modification is found at Lys-268.

It belongs to the class-III pyridoxal-phosphate-dependent aminotransferase family. HemL subfamily. As to quaternary structure, homodimer. It depends on pyridoxal 5'-phosphate as a cofactor.

The protein resides in the cytoplasm. It catalyses the reaction (S)-4-amino-5-oxopentanoate = 5-aminolevulinate. It participates in porphyrin-containing compound metabolism; protoporphyrin-IX biosynthesis; 5-aminolevulinate from L-glutamyl-tRNA(Glu): step 2/2. The protein is Glutamate-1-semialdehyde 2,1-aminomutase 1 of Geobacillus thermodenitrificans (strain NG80-2).